The primary structure comprises 89 residues: Elongation factor 1-beta (89 aa).

It belongs to the EF-1-beta/EF-1-delta family.

Promotes the exchange of GDP for GTP in EF-1-alpha/GDP, thus allowing the regeneration of EF-1-alpha/GTP that could then be used to form the ternary complex EF-1-alpha/GTP/AAtRNA. The protein is Elongation factor 1-beta of Methanococcus vannielii (strain ATCC 35089 / DSM 1224 / JCM 13029 / OCM 148 / SB).